Consider the following 404-residue polypeptide: Glucose-1-phosphate adenylyltransferase (404 aa).

Alpha-D-glucose 1-phosphate is bound by residues tyrosine 99, glycine 164, 179 to 180 (EK), and serine 197.

Belongs to the bacterial/plant glucose-1-phosphate adenylyltransferase family.

It catalyses the reaction alpha-D-glucose 1-phosphate + ATP + H(+) = ADP-alpha-D-glucose + diphosphate. Its pathway is capsule biogenesis; capsule polysaccharide biosynthesis. It participates in glycan biosynthesis; glycogen biosynthesis. Functionally, involved in the biosynthesis of ADP-glucose, a building block, required in the biosynthesis of maltose-1-phosphate (M1P) and in the elongation reactions to produce linear alpha-1,4-glucans. Catalyzes the reaction between ATP and alpha-D-glucose 1-phosphate (G1P) to produce pyrophosphate and ADP-Glc. The polypeptide is Glucose-1-phosphate adenylyltransferase (Mycolicibacterium paratuberculosis (strain ATCC BAA-968 / K-10) (Mycobacterium paratuberculosis)).